Here is a 69-residue protein sequence, read N- to C-terminus: uncharacterized protein (69 aa).

Topologically, residues 1–15 are cytoplasmic; the sequence is MLLYIVIIVACIISK. The chain crosses the membrane as a helical span at residues 16 to 36; the sequence is LVPNEYWAIHLFFIIMIFMVY. Over 37 to 69 the chain is Extracellular; the sequence is MYEKLDIHQKYQFWNYTMSGLSGHNVQVICKCY. Asn51 carries N-linked (GlcNAc...) asparagine; by host glycosylation.

The protein belongs to the asfivirus X69R family.

Its subcellular location is the host membrane. This is an uncharacterized protein from Ornithodoros (relapsing fever ticks).